The chain runs to 169 residues: ATP synthase subunit b, sodium ion specific (169 aa).

A helical membrane pass occupies residues 5–27; sequence SFISLDWGVVFQIVNTIVMYLIL.

This sequence belongs to the ATPase B chain family. In terms of assembly, F-type ATPases have 2 components, F(1) - the catalytic core - and F(0) - the membrane proton channel. F(1) has five subunits: alpha(3), beta(3), gamma(1), delta(1), epsilon(1). F(0) has three main subunits: a(1), b(2) and c(10-14). The alpha and beta chains form an alternating ring which encloses part of the gamma chain. F(1) is attached to F(0) by a central stalk formed by the gamma and epsilon chains, while a peripheral stalk is formed by the delta and b chains.

The protein resides in the cell membrane. Its function is as follows. F(1)F(0) ATP synthase produces ATP from ADP in the presence of a proton or sodium gradient. F-type ATPases consist of two structural domains, F(1) containing the extramembraneous catalytic core and F(0) containing the membrane proton channel, linked together by a central stalk and a peripheral stalk. During catalysis, ATP synthesis in the catalytic domain of F(1) is coupled via a rotary mechanism of the central stalk subunits to proton translocation. In terms of biological role, component of the F(0) channel, it forms part of the peripheral stalk, linking F(1) to F(0). Functionally, in this organism this enzyme may function as an ATP-driven Na(+) ion pump to generate a Na(+) ion electrochemical gradient rather than as an ATP synthase. In Clostridium paradoxum, this protein is ATP synthase subunit b, sodium ion specific (atpF).